The following is a 706-amino-acid chain: F-box/WD repeat-containing protein 7 (706 aa).

Positions 1–157 are disordered; sequence MNQELLSVGS…IVDLPIHQRS (157 aa). The residue at position 26 (S26) is a Phosphoserine. Basic and acidic residues predominate over residues 32 to 54; sequence QMNRVLEEEQQQPRHQEEEHAAR. The span at 69–83 shows a compositional bias: polar residues; that stretch reads NDPQQGQLEENNNRF. A compositionally biased stretch (acidic residues) spans 86-128; sequence VDEDSSGNQEEQEEDEEHAGEQDEEDEEEEEMDQESDDFDQSD. Over residues 129-138 the composition is skewed to basic and acidic residues; that stretch reads DSSREDEHTH. Phosphothreonine is present on T204. Position 226 is a phosphoserine (S226). The F-box domain occupies 277–323; sequence RDFISLLPKELALYVLSFLEPKDLLQAAQTCRYWRILAEDNLLWREK. WD repeat units lie at residues 377–417, 419–455, 458–497, 499–535, 538–577, 579–617, and 621–658; these read GHDD…RTLV, HTGGVWSSQMRDNIIISGSTDRTLKVWNAETGECIHT, GHTSTVRCMHLHEKRVVSGSRDATLRVWDIETGQCLHVLM, HVAAVRCVQYDGRRVVSGAYDFMVKVWDPETETCLHT, GHTNRVYSLQFDGIHVVSGSLDTSIRVWDVETGNCIHTLT, HQSLTSGMELKDNILVSGNADSTVKIWDIKTGQCLQTLQ, and KHQSAVTCLQFNKNFVITSSDDGTVKLWDLKTGEFIRN.

In terms of assembly, homodimer; homodimerization plays a role in substrate binding and/or ubiquitination and degradation. Component of the SCF(FBXW7) complex consisting of CUL1, RBX1, SKP1 and FBXW7. Interacts (via F-box domain) with SKP1. Interacts (via F-box domain) with pseudophosphatase STYX; the interaction is direct and prevents FBXW7 interaction with SKP1. Interacts with cyclin-E (CCNE1 or CCNE2). Interacts with PSEN1. Forms a trimeric complex with NOTCH1 and SGK1. Interacts with NOTCH1 intracellular domain/NICD and NOTCH4 intracellular domain/NICD. Interacts with NOTCH2 intracellular domain (N2ICD). Interacts with MYC (when phosphorylated). Interacts with USP28, counteracting ubiquitination of MYC. Interacts with JUN. Found in a complex with JUN and PRR7. Interacts with JUN and PRR7; the interaction inhibits ubiquitination-mediated JUN degradation, promoting its phosphorylation and transcriptional activity. Interacts (when phosphorylated at Thr-204) with PIN1, disrupting FBXW7 dimerization and promoting FBXW7 autoubiquitination and degradation. Interacts with UBE2QL1. Interacts with FAM83D; promotes FBXW7 degradation. Interacts with MYCN; FBXW7 competes with AURKA for binding to unphosphorylated MYCN but not for binding to phosphorylated MYCN. Interacts with STOML1. Interacts with NFE2L1. Interacts with USP36, counteracting ubiquitination of MYC. Interacts with RICTOR; mediates RICTOR ubiquitination and degradation.l Interacts with USP38, counteracting ubiquitination of MYC. (Microbial infection) In case of infection, interacts with T.annulata PIN1 (TaPIN1); leading to FBXW7 autoubiquitination and subsequent degradation: FBXW7 degradation promotes stabilization of JUN, which promotes cell transformation. In terms of processing, phosphorylation at Thr-204 promotes interaction with PIN1, leading to disrupt FBXW7 dimerization and promoting FBXW7 autoubiquitination and degradation. Phosphorylated by ATM at Ser-26 in response to DNA damage, promoting recruitment to DNA damage sites and 'Lys-63'-linked ubiquitination of phosphorylated XRCC4. Post-translationally, ubiquitinated: autoubiquitinates following phosphorylation at Thr-204 and subsequent interaction with PIN1. Ubiquitination leads to its degradation.

Its subcellular location is the nucleus. The protein resides in the nucleoplasm. It localises to the chromosome. It functions in the pathway protein modification; protein ubiquitination. Its function is as follows. Substrate recognition component of a SCF (SKP1-CUL1-F-box protein) E3 ubiquitin-protein ligase complex which mediates the ubiquitination and subsequent proteasomal degradation of target proteins. Recognizes and binds phosphorylated sites/phosphodegrons within target proteins and thereafter brings them to the SCF complex for ubiquitination. Identified substrates include cyclin-E (CCNE1 or CCNE2), DISC1, JUN, MYC, NOTCH1 released notch intracellular domain (NICD), NOTCH2, MCL1, MLST8, RICTOR, and probably PSEN1. Acts as a negative regulator of JNK signaling by binding to phosphorylated JUN and promoting its ubiquitination and subsequent degradation. SCF(FBXW7) complex mediates the ubiquitination and subsequent degradation of NFE2L1. Involved in bone homeostasis and negative regulation of osteoclast differentiation. Also able to promote 'Lys-63'-linked ubiquitination in response to DNA damage. The SCF(FBXW7) complex facilitates double-strand break repair following phosphorylation by ATM: phosphorylation promotes localization to sites of double-strand breaks and 'Lys-63'-linked ubiquitination of phosphorylated XRCC4, enhancing DNA non-homologous end joining. The polypeptide is F-box/WD repeat-containing protein 7 (Bos taurus (Bovine)).